The sequence spans 524 residues: Glutamyl-tRNA(Gln) amidotransferase subunit A, mitochondrial (524 aa).

Catalysis depends on charge relay system residues lysine 76 and serine 171. The Acyl-ester intermediate role is filled by serine 195.

This sequence belongs to the amidase family. GatA subfamily. As to quaternary structure, subunit of the heterotrimeric GatCAB amidotransferase (AdT) complex, composed of A (qrsl1), B (gatb) and C (gatc) subunits.

It is found in the mitochondrion. The catalysed reaction is L-glutamyl-tRNA(Gln) + L-glutamine + ATP + H2O = L-glutaminyl-tRNA(Gln) + L-glutamate + ADP + phosphate + H(+). Allows the formation of correctly charged Gln-tRNA(Gln) through the transamidation of misacylated Glu-tRNA(Gln) in the mitochondria. The reaction takes place in the presence of glutamine and ATP through an activated gamma-phospho-Glu-tRNA(Gln). The polypeptide is Glutamyl-tRNA(Gln) amidotransferase subunit A, mitochondrial (qrsl1) (Xenopus tropicalis (Western clawed frog)).